The sequence spans 183 residues: Orotate phosphoribosyltransferase (183 aa).

5-phospho-alpha-D-ribose 1-diphosphate-binding positions include arginine 21, lysine 88, and 112-120 (EDVVTTGES). Orotate contacts are provided by threonine 116 and arginine 144.

The protein belongs to the purine/pyrimidine phosphoribosyltransferase family. PyrE subfamily. Homodimer. It depends on Mg(2+) as a cofactor.

The enzyme catalyses orotidine 5'-phosphate + diphosphate = orotate + 5-phospho-alpha-D-ribose 1-diphosphate. It functions in the pathway pyrimidine metabolism; UMP biosynthesis via de novo pathway; UMP from orotate: step 1/2. Its function is as follows. Catalyzes the transfer of a ribosyl phosphate group from 5-phosphoribose 1-diphosphate to orotate, leading to the formation of orotidine monophosphate (OMP). This Thermus thermophilus (strain ATCC 27634 / DSM 579 / HB8) protein is Orotate phosphoribosyltransferase.